The chain runs to 255 residues: Acetylglutamate kinase (255 aa).

Substrate contacts are provided by residues 40-41 (GG), Arg-62, and Asn-153.

This sequence belongs to the acetylglutamate kinase family. ArgB subfamily.

It is found in the cytoplasm. It carries out the reaction N-acetyl-L-glutamate + ATP = N-acetyl-L-glutamyl 5-phosphate + ADP. The protein operates within amino-acid biosynthesis; L-arginine biosynthesis; N(2)-acetyl-L-ornithine from L-glutamate: step 2/4. Its function is as follows. Catalyzes the ATP-dependent phosphorylation of N-acetyl-L-glutamate. The chain is Acetylglutamate kinase from Bacillus thuringiensis (strain Al Hakam).